A 215-amino-acid polypeptide reads, in one-letter code: Adenylate kinase (215 aa).

10-15 contributes to the ATP binding site; that stretch reads GAGKGT. Residues 30–59 form an NMP region; the sequence is STGDIFRANISGKTELGMKAKGYMDKGLLV. Residues threonine 31, arginine 36, 57–59, 85–88, and glutamine 92 each bind AMP; these read LLV and GFPR. Positions 126–163 are LID; it reads GRRVCSKCGASYHIEYNPTKVEGICDLCGSPVVQRKDD. Arginine 127 is an ATP binding site. Zn(2+) is bound by residues cysteine 130 and cysteine 133. 136 to 137 serves as a coordination point for ATP; that stretch reads SY. Zn(2+) contacts are provided by cysteine 150 and cysteine 153. AMP is bound by residues arginine 160 and arginine 171. Glutamine 199 provides a ligand contact to ATP.

This sequence belongs to the adenylate kinase family. In terms of assembly, monomer.

The protein localises to the cytoplasm. The catalysed reaction is AMP + ATP = 2 ADP. It functions in the pathway purine metabolism; AMP biosynthesis via salvage pathway; AMP from ADP: step 1/1. Its function is as follows. Catalyzes the reversible transfer of the terminal phosphate group between ATP and AMP. Plays an important role in cellular energy homeostasis and in adenine nucleotide metabolism. The chain is Adenylate kinase from Clostridium acetobutylicum (strain ATCC 824 / DSM 792 / JCM 1419 / IAM 19013 / LMG 5710 / NBRC 13948 / NRRL B-527 / VKM B-1787 / 2291 / W).